Consider the following 423-residue polypeptide: UPF0229 protein PLES_05841 (423 aa).

Residues 84–107 (AGEHIARPSGGGGGRGGGKASNSG) are disordered. Over residues 92 to 102 (SGGGGGRGGGK) the composition is skewed to gly residues.

Belongs to the UPF0229 family.

The chain is UPF0229 protein PLES_05841 from Pseudomonas aeruginosa (strain LESB58).